We begin with the raw amino-acid sequence, 219 residues long: Ribose-5-phosphate isomerase A (219 aa).

Substrate contacts are provided by residues 28–31 (TGST), 81–84 (DGAD), and 94–97 (KGGG). The active-site Proton acceptor is the glutamate 103. Lysine 121 is a binding site for substrate.

Belongs to the ribose 5-phosphate isomerase family. In terms of assembly, homodimer.

It catalyses the reaction aldehydo-D-ribose 5-phosphate = D-ribulose 5-phosphate. It functions in the pathway carbohydrate degradation; pentose phosphate pathway; D-ribose 5-phosphate from D-ribulose 5-phosphate (non-oxidative stage): step 1/1. In terms of biological role, catalyzes the reversible conversion of ribose-5-phosphate to ribulose 5-phosphate. The sequence is that of Ribose-5-phosphate isomerase A from Shigella boydii serotype 18 (strain CDC 3083-94 / BS512).